A 402-amino-acid polypeptide reads, in one-letter code: tRNA(Met) cytidine acetate ligase (402 aa).

ATP is bound by residues 7-20 (ITEY…HELH), glycine 102, asparagine 171, and arginine 196.

This sequence belongs to the TmcAL family.

Its subcellular location is the cytoplasm. It carries out the reaction cytidine(34) in elongator tRNA(Met) + acetate + ATP = N(4)-acetylcytidine(34) in elongator tRNA(Met) + AMP + diphosphate. Catalyzes the formation of N(4)-acetylcytidine (ac(4)C) at the wobble position of elongator tRNA(Met), using acetate and ATP as substrates. First activates an acetate ion to form acetyladenylate (Ac-AMP) and then transfers the acetyl group to tRNA to form ac(4)C34. In Clostridium perfringens (strain ATCC 13124 / DSM 756 / JCM 1290 / NCIMB 6125 / NCTC 8237 / Type A), this protein is tRNA(Met) cytidine acetate ligase.